The chain runs to 236 residues: MIREKFAYRETITTILADDTSHVEAAKGGMIAARTGVEEYLLTDPFFQMSYSPVSAPADAPESVRCMAAASFEADVGPMAAVAATIGWAGVKAMQNRGAAFGLIDNGGDIVLFSNRELRVGIYAGPAPSSGKFAFLITPQTEILGICTSSATVGPSVSFGIADSVTCFSHDPAKADAWATGLCNILTPENFDKVMKKVEESSVFAVYAVIGDWIGRWGDLPEIVPAHVSYDLITKG.

Belongs to the UPF0280 family.

The sequence is that of UPF0280 protein Mlab_0453 from Methanocorpusculum labreanum (strain ATCC 43576 / DSM 4855 / Z).